The following is a 648-amino-acid chain: MGVLARIQGPDDLRQLSHAEMTELADEIREFLVLKVAATGGHLGPNLGVVELTLALHRIFDSPQDAIIFDTGHQAYVHKILTGRQDQFDTLRKQGGLSGYPCRAESEHDWVESSHASAALSYADGLAKAFALTGQNRHVVAVVGDGALTGGMCWEALNNIAAGKDRSVVIVVNDNGRSYAPTIGGLADHLSALRTAPSYERALDSGRRMVKRLPWVGRTAYSVLHGMKAGLKDAVSPQVMFTDLGIKYLGPVDGHDEAAMESALRRAKAYGGPVIVHAVTRKGNGYAHAENDVADQMHATGVIDPVTGRGTKSSAPDWTSVFSAALIEQASRREDIVAITAAMAGPTGLAAFGEKFPDRIFDVGIAEQHAMTSAAGLALGGLHPVVAIYSTFLNRAFDQLLMDVALLKQPVTVVLDRAGVTGVDGASHNGVWDLSLLGIIPGIRVAAPRDADTLREELDEALLVDDGPTVVRFPKGAVPEAIPAVKRLDGMVDVLKASEGERGDVLLVAVGPFASLALEIAERLDKQGISVAVVDPRWVLPVADSLVKMADKYALVVTIEDGGLHGGIGSTVSAAMRAAGVHTSCRDMGVPQQFLDHASREAIHKELGLTAQDLSRKITGWVAGMGSVGVHVQEDASSASAQGEVAQG.

Residues H73 and 114–116 each bind thiamine diphosphate; that span reads SHA. Mg(2+) is bound at residue D145. Thiamine diphosphate-binding positions include 146-147, N175, Y286, and E367; that span reads GA. N175 contacts Mg(2+).

It belongs to the transketolase family. DXPS subfamily. Homodimer. Mg(2+) is required as a cofactor. It depends on thiamine diphosphate as a cofactor.

The enzyme catalyses D-glyceraldehyde 3-phosphate + pyruvate + H(+) = 1-deoxy-D-xylulose 5-phosphate + CO2. It functions in the pathway metabolic intermediate biosynthesis; 1-deoxy-D-xylulose 5-phosphate biosynthesis; 1-deoxy-D-xylulose 5-phosphate from D-glyceraldehyde 3-phosphate and pyruvate: step 1/1. Functionally, catalyzes the acyloin condensation reaction between C atoms 2 and 3 of pyruvate and glyceraldehyde 3-phosphate to yield 1-deoxy-D-xylulose-5-phosphate (DXP). In Rhodococcus erythropolis (strain PR4 / NBRC 100887), this protein is 1-deoxy-D-xylulose-5-phosphate synthase.